A 466-amino-acid polypeptide reads, in one-letter code: Chromosomal replication initiator protein DnaA (466 aa).

Positions 1 to 86 (MSLSLWQQCL…EVGTKPVTQT (86 aa)) are domain I, interacts with DnaA modulators. Residues 86-129 (TLKTPVHNVVAPTQTTTAQPQRVAPAARSGWDNVPAPAEPTYRS) are domain II. The segment at 130–346 (NVNVKHTFDN…GALNRVIANA (217 aa)) is domain III, AAA+ region. 4 residues coordinate ATP: Gly174, Gly176, Lys177, and Thr178. A domain IV, binds dsDNA region spans residues 347 to 466 (NFTGRAITID…FSNLIRTLSS (120 aa)).

It belongs to the DnaA family. Oligomerizes as a right-handed, spiral filament on DNA at oriC.

Its subcellular location is the cytoplasm. Plays an essential role in the initiation and regulation of chromosomal replication. ATP-DnaA binds to the origin of replication (oriC) to initiate formation of the DNA replication initiation complex once per cell cycle. Binds the DnaA box (a 9 base pair repeat at the origin) and separates the double-stranded (ds)DNA. Forms a right-handed helical filament on oriC DNA; dsDNA binds to the exterior of the filament while single-stranded (ss)DNA is stabiized in the filament's interior. The ATP-DnaA-oriC complex binds and stabilizes one strand of the AT-rich DNA unwinding element (DUE), permitting loading of DNA polymerase. After initiation quickly degrades to an ADP-DnaA complex that is not apt for DNA replication. Binds acidic phospholipids. The sequence is that of Chromosomal replication initiator protein DnaA from Salmonella enteritidis PT4 (strain P125109).